The primary structure comprises 822 residues: Endonuclease MutS2 (822 aa).

348–355 (GPNTGGKT) is an ATP binding site. Residues 707–737 (SLNGKKVEPPPKSEPVPKKVKAEPPATEAKS) form a disordered region. Over residues 709-728 (NGKKVEPPPKSEPVPKKVKA) the composition is skewed to basic and acidic residues. The 74-residue stretch at 749 to 822 (LDCRGDRLER…GAGVTIAYLR (74 aa)) folds into the Smr domain.

The protein belongs to the DNA mismatch repair MutS family. MutS2 subfamily. As to quaternary structure, homodimer. Binds to stalled ribosomes, contacting rRNA.

In terms of biological role, endonuclease that is involved in the suppression of homologous recombination and thus may have a key role in the control of bacterial genetic diversity. Its function is as follows. Acts as a ribosome collision sensor, splitting the ribosome into its 2 subunits. Detects stalled/collided 70S ribosomes which it binds and splits by an ATP-hydrolysis driven conformational change. Acts upstream of the ribosome quality control system (RQC), a ribosome-associated complex that mediates the extraction of incompletely synthesized nascent chains from stalled ribosomes and their subsequent degradation. Probably generates substrates for RQC. The protein is Endonuclease MutS2 of Synechocystis sp. (strain ATCC 27184 / PCC 6803 / Kazusa).